Consider the following 319-residue polypeptide: uncharacterized protein (319 aa).

Residues 1–27 (MYKKFVPFAVFLFLFFVSFEMMENPHA) form the signal peptide. In terms of domain architecture, NodB homology spans 130–306 (PMVAFLINVA…QIKDKGYALG (177 aa)).

It belongs to the polysaccharide deacetylase family.

This is an uncharacterized protein from Bacillus subtilis (strain 168).